Reading from the N-terminus, the 217-residue chain is Protein dao-4 (217 aa).

Positions 1–21 are cleaved as a signal peptide; the sequence is MKIALYSILLITVCYLSSTDA.

It localises to the nucleus. The protein resides in the secreted. Its function is as follows. Probably acts downstream of the Wnt signaling pathway. In Caenorhabditis elegans, this protein is Protein dao-4.